Reading from the N-terminus, the 122-residue chain is Small ribosomal subunit protein uS12c (122 aa).

This sequence belongs to the universal ribosomal protein uS12 family. As to quaternary structure, part of the 30S ribosomal subunit.

The protein localises to the plastid. It localises to the chloroplast. With S4 and S5 plays an important role in translational accuracy. Located at the interface of the 30S and 50S subunits. This Illicium oligandrum (Star anise) protein is Small ribosomal subunit protein uS12c (rps12).